The following is a 319-amino-acid chain: Transcriptional regulator LsrR (319 aa).

Residues 32 to 55 (QSEISERLGLTRLKVSRLLEKGHQ) constitute a DNA-binding region (H-T-H motif).

It belongs to the SorC transcriptional regulatory family.

The protein resides in the cytoplasm. With respect to regulation, inactivated by phosphorylated autoinducer-2 (phospho-AI-2). Phospho-AI-2 acts by binding to LsrR, which is then unable to bind to the promoter regions, allowing the transcription of the target genes. Transcriptional regulator that represses the expression of the lsr operon (lsrACDBFGE) in the absence of the quorum-sensing signaling molecule autoinducer 2 (AI-2). It also represses the expression of the lsrRK operon. Acts by binding to the intergenic region between the lsr operon and lsrR. In the presence of phosphorylated autoinducer-2 (phospho-AI-2), LsrR is inactivated, leading to the transcription of the genes. The regulatory function of LsrR was thought to be limited to the lsr operon, but it was subsequently shown to be involved, directly or indirectly, in the regulation of SPI-1 and flagella genes. It negatively regulates the expression of those genes, which reduces the ability of Salmonella to invade host cells. The protein is Transcriptional regulator LsrR of Salmonella typhimurium (strain LT2 / SGSC1412 / ATCC 700720).